We begin with the raw amino-acid sequence, 163 residues long: Phosphopantetheine adenylyltransferase (163 aa).

Position 10 (serine 10) interacts with substrate. ATP contacts are provided by residues 10 to 11 and histidine 18; that span reads SF. 3 residues coordinate substrate: lysine 42, leucine 74, and arginine 88. ATP-binding positions include 89-91, glutamate 99, and 124-130; these read GLR and YSFLSSS.

This sequence belongs to the bacterial CoaD family. As to quaternary structure, homohexamer. The cofactor is Mg(2+).

It is found in the cytoplasm. It carries out the reaction (R)-4'-phosphopantetheine + ATP + H(+) = 3'-dephospho-CoA + diphosphate. It functions in the pathway cofactor biosynthesis; coenzyme A biosynthesis; CoA from (R)-pantothenate: step 4/5. Reversibly transfers an adenylyl group from ATP to 4'-phosphopantetheine, yielding dephospho-CoA (dPCoA) and pyrophosphate. In Bacillus mycoides (strain KBAB4) (Bacillus weihenstephanensis), this protein is Phosphopantetheine adenylyltransferase.